The chain runs to 339 residues: Anthranilate phosphoribosyltransferase (339 aa).

5-phospho-alpha-D-ribose 1-diphosphate contacts are provided by residues G81, 84–85, S89, 91–94, 109–117, and A121; these read GD, NVSS, and KHGNRALSS. G81 provides a ligand contact to anthranilate. S93 lines the Mg(2+) pocket. Residue N112 participates in anthranilate binding. R167 is a binding site for anthranilate. Mg(2+) contacts are provided by D225 and E226.

The protein belongs to the anthranilate phosphoribosyltransferase family. Homodimer. Requires Mg(2+) as cofactor.

It carries out the reaction N-(5-phospho-beta-D-ribosyl)anthranilate + diphosphate = 5-phospho-alpha-D-ribose 1-diphosphate + anthranilate. It participates in amino-acid biosynthesis; L-tryptophan biosynthesis; L-tryptophan from chorismate: step 2/5. Functionally, catalyzes the transfer of the phosphoribosyl group of 5-phosphorylribose-1-pyrophosphate (PRPP) to anthranilate to yield N-(5'-phosphoribosyl)-anthranilate (PRA). This Brucella abortus (strain S19) protein is Anthranilate phosphoribosyltransferase.